The following is a 336-amino-acid chain: Type II methyltransferase M2.HphI (336 aa).

It belongs to the N(4)/N(6)-methyltransferase family.

The catalysed reaction is a 2'-deoxyadenosine in DNA + S-adenosyl-L-methionine = an N(6)-methyl-2'-deoxyadenosine in DNA + S-adenosyl-L-homocysteine + H(+). Functionally, an alpha subtype methylase that recognizes the double-stranded sequence 5'-GGTGA-3', probably methylates A-5 on the top strand, and protects the DNA from cleavage by the HphI endonuclease. The polypeptide is Type II methyltransferase M2.HphI (hphIBM) (Haemophilus parahaemolyticus).